Consider the following 295-residue polypeptide: Protease HtpX homolog (295 aa).

A run of 2 helical transmembrane segments spans residues 6–26 and 40–60; these read IGLF…VTSV and LSSL…VSLL. His-148 contributes to the Zn(2+) binding site. The active site involves Glu-149. His-152 contacts Zn(2+). The next 2 membrane-spanning stretches (helical) occupy residues 163–183 and 198–218; these read LIQG…SYAL and ISNI…VAYF. Position 223 (Glu-223) interacts with Zn(2+).

It belongs to the peptidase M48B family. Zn(2+) is required as a cofactor.

The protein resides in the cell inner membrane. In Leptospira borgpetersenii serovar Hardjo-bovis (strain JB197), this protein is Protease HtpX homolog.